The chain runs to 229 residues: MQPEFKKKSIRSFVIRGGRMTEGQKNAFDKWWPHYGVSLFDGPINPAELFGRSAPLVLEIGFGMGDSLVDMAIADPDSDFIGIEVHPPGVGRLINRAGTEGVPNLRCYMADANDVLSDCIPDGSLDRLQLFFPDPWHKKKHNKRRIVQPEFVEKIRAKLKIGGHFHMATDWEAYAEHMMEVMTAAPGYENIAGGSEFAPQPSYRPTTKFERRGENLGHGVWDIIFSRSL.

S-adenosyl-L-methionine contacts are provided by glutamate 59, glutamate 84, aspartate 111, and aspartate 134. Residue aspartate 134 is part of the active site. Lysine 138 is a substrate binding site. The segment at lysine 140–arginine 145 is interaction with RNA. Substrate is bound by residues aspartate 170 and threonine 207–glutamate 210.

This sequence belongs to the class I-like SAM-binding methyltransferase superfamily. TrmB family.

It catalyses the reaction guanosine(46) in tRNA + S-adenosyl-L-methionine = N(7)-methylguanosine(46) in tRNA + S-adenosyl-L-homocysteine. It functions in the pathway tRNA modification; N(7)-methylguanine-tRNA biosynthesis. Its function is as follows. Catalyzes the formation of N(7)-methylguanine at position 46 (m7G46) in tRNA. The sequence is that of tRNA (guanine-N(7)-)-methyltransferase from Saccharophagus degradans (strain 2-40 / ATCC 43961 / DSM 17024).